The sequence spans 132 residues: D-ribose pyranase (132 aa).

His20 serves as the catalytic Proton donor. Substrate contacts are provided by residues Asp28, His99, and 121 to 123 (YSN).

The protein belongs to the RbsD / FucU family. RbsD subfamily. Homodecamer.

The protein localises to the cytoplasm. The enzyme catalyses beta-D-ribopyranose = beta-D-ribofuranose. The protein operates within carbohydrate metabolism; D-ribose degradation; D-ribose 5-phosphate from beta-D-ribopyranose: step 1/2. In terms of biological role, catalyzes the interconversion of beta-pyran and beta-furan forms of D-ribose. The protein is D-ribose pyranase of Lactococcus lactis subsp. lactis (strain IL1403) (Streptococcus lactis).